Here is a 96-residue protein sequence, read N- to C-terminus: Beta-defensin 20 (96 aa).

An N-terminal signal peptide occupies residues 1 to 21 (MKLPQLLLILLFVVLADSVQP). 3 disulfides stabilise this stretch: Cys24–Cys52, Cys32–Cys46, and Cys36–Cys53.

The protein belongs to the beta-defensin family.

It localises to the secreted. Its function is as follows. Has antibacterial activity. This Rattus norvegicus (Rat) protein is Beta-defensin 20 (Defb20).